The following is a 688-amino-acid chain: Acyl-CoA synthetase short-chain family member B, mitochondrial (688 aa).

Belongs to the ATP-dependent AMP-binding enzyme family.

It is found in the mitochondrion. It carries out the reaction acetate + ATP + CoA = acetyl-CoA + AMP + diphosphate. In terms of biological role, activates acetate so that it can be used for lipid synthesis or for energy generation. This is Acyl-CoA synthetase short-chain family member B, mitochondrial (aslB) from Dictyostelium discoideum (Social amoeba).